The chain runs to 138 residues: Transcription antitermination protein NusB (138 aa).

This sequence belongs to the NusB family.

Involved in transcription antitermination. Required for transcription of ribosomal RNA (rRNA) genes. Binds specifically to the boxA antiterminator sequence of the ribosomal RNA (rrn) operons. This is Transcription antitermination protein NusB from Leptospira interrogans serogroup Icterohaemorrhagiae serovar copenhageni (strain Fiocruz L1-130).